Here is a 413-residue protein sequence, read N- to C-terminus: Probable alpha-tubulin polyglutamylase Ttll1 (413 aa).

In terms of domain architecture, TTL spans 2–370 (ASKKLKYKTD…DDWNDDSSKT (369 aa)). ATP-binding positions include 184–187 (SRYI), Lys-197, and Asp-199.

The protein belongs to the tubulin polyglutamylase family.

It is found in the cytoplasm. It localises to the cytoskeleton. Its subcellular location is the cilium basal body. The protein localises to the contractile vacuole. Its function is as follows. Probable tubulin polyglutamylase with a strong preference for alpha-tubulin. Modifies alpha-tubulin, generating side chains of glutamate on the gamma-carboxyl groups of specific glutamate residues within the C-terminal tail of alpha-tubulin. The chain is Probable alpha-tubulin polyglutamylase Ttll1 (Ttll1) from Tetrahymena thermophila (strain SB210).